The following is a 2971-amino-acid chain: MTFLNHYTYLFSIPEKQADKVSGILRLAQARPIETLQNERINKQLNAFLKTYKFEKLITNYKKMQSFIPNNSLNGNKTNSSTNKLYATSLNVFPENPPLMVRKAVSDEADKFSKFTYSKVQVVTNNLNNGMNSKEFIKANNLKPSLRAAESLVLNHLTYNKFKENLYFKTNNIQPTKSKSTSLFFLNILSNSKPRTCSDFLSSPKIRKTWFRNTAWSLQTQQHRSSNGINLSLQLPYALGPSVPAGASGQNMYELPVAQSSSRFGTYYFLQKLLSKYLDVWNASADNGSVLSNSENIKLNFSMVSLLDSKMAIQTPNSLYFVFTQLNQKTFLSYWLLPVAGLALLTPTLLTLTGQSVSVQKFNSFINKKTDMMVLSNTEMPSKSFGTPTLFGTSVEIYLPNSYMPKGEGESGINRVNSSINAVKKNTVTANLVLDSESQEVATSFQNDLISIKYCFNNLYNYISNKTALSTKNLFLFSAIKSNATKHKRTQSFFSVENTTTLGNNSNFVKGHFKSSINAFSSYLPSTNVHSMIPLTSLPYLKAISPLYSKFMIDHSLKFITPKTTLKLLQHKLNKSPKQMYTKTQNFTGLRDLRALNSFSFGQVNFRTNHFLHSNSRPLNHYNQALKLINGYEQYKNNLQINCNKTLDLNTKNKLVYQVHKSHLFNQKCSQIVYKQSLYNRDLCTIRGTGTKVVDYFSHGDKLSNKNGIVLDYFVYSNLLFDNKTNTIINKDGKQNITKLKLNLTKTTVPFKTLIKKYTSINSLVANEQTRNNLNLGLIHFNGHLSVVSNANLLTGRPVKFIYYKFDKRLNSYLIYVNQNLKKFIQLNNNFLKPKPLSHQKNKPVEDFNQYATNNSSPPKTNVFEKSFVEDSSLRKPLTSLRGSKQFLNSLTILFKHQKMFKKKTLKAHKWHSDTQGIFRKHTNSSFGSANFSNGPEESSLSTRLHIQKKRKAKKQRLETRRQKKRTRFFPRPVWLRSRMFLNFLTERNKYYLNSTITKQGFSLPSKDVVTTKLDWLKEDMRPSSLGAYQYKSLLTQKAGNKFQRQSFTEVVSTMEYINGIHKALNNSIFNKIVRKSLLSSSQNPLKLRLVANYSKMQFMHRVKLPFYRTLKHSEGTKNLANKKQNLRDIKIKANYNNFKSQKANNQPQQNDKDKDKDTMFRDFWVWSYNNTQTNAFNQNLWWLLPNLTTKQSNLEFLTSTYPTAKETQRAKEEIHGNSIPTASKNQIALIRLNWALNKTNINTFTDYSKRNNLWTTQKLRNQSKNNKTKSLEKQFITNWEKFFLNKNLNIFSKKIISKVKQKKQKLNYMTSYLNVQSEHNVKIFHNSWWTHLNIKNLVNNQDMVIPVREGYFSVGNFNSEFINSAIIKSINNKTLVENYVYSPSSEKETMQLLLMSSSILLHLCAIISLVSISQVRCFVKFHLILLYKLSNVYNAILNQLSNKLQKNLPIYNNINKLNSRYFYMNHQKSQIKQRKKLLTYFSLTLLKKQFVTVKPLQIRNFASIKNQSSNNSNLTYTDMLPLSLRANKFRGSKYDISIREEEGQSAHIKPSKSMYAKLNILSLKTIFLKQLLMNKKPSALPSNVGLKSNRETQKSQLIQRIKTKELQISLKKNIIGFSKVTKNHILKILFNVIEVFQTAVRNISSFFEKPAEFTTTWIAYGFLVEWSSDFITIIPENVDIYIWNVFSKIYRTIPLSFISTTLGPASTVFDPVTNSTIPIQMGNFNYQKMVAFPILLSLSHLLHRRILYLFDTLFSTITQPDTDLIARQEKGTLFWDIWADFLVTAADYYNVNVAALSTIKAEQNSLIENISNDFDNLTMSSKKPFFMPNKGVSNIKNIFWIKKLKEPQLPESIVQNREVFVRERKRTLKGLFNIYAPQEETLWNNPTSPKNLSDEKISFKLFNQLNLQLFAEKNKIKPYFEAYFSTTQQKTNIMQSAFPEANLNRWSVNQFITYQSWHSHNGSNNSNGDLFIDYHPPKTFSHIPALKYNSILQQPIGSLVCQIYSGLFNKQISKNILLVNPKTTSNNLVDYNVLLIQALAGETEMKIITDNAQRYALVNRGFAIGIKLLREVFDAIALNTPCIFLLEDIHAIGERRPMLISDFGGGMSDDNGSFKEDFFGSQRDEVHEKNQVVYQLTRHAITHYKKPFKGDYSLAIPTNLYVTDLFLKLPTQSISNLTNVENHNLSIKNKIQHNGTQSLTETKRNLGGDINKNSYLQLTQFTKTLAPPSTSPFSVLLLKEEKRLKPNKIVEELPWTSLPGEQLATKPRTSYSVRAKVAMLAELSLSNLSAKLDMITDLLVIIDSVRSNKGFVVFATTDIPHVLDPALRRPGRLDETICLPNIHTSNILNFTKNYEIFKSAKDTSNFGKKIILNEMQNLTTTSTQRDMYLSCLPTNNQTHKTKREGVLTMNLKDYNILLNQVYFAEGTGGILNSQMHKDSLQKSLNFALISHSKKLKELNVSKLIGSNGTVSQGNVDQLGVFAGQIVNKQKKSLQQHLPNSKKSFKKKYKDKAIIYYEVGKFVLNYFLNNQLTQSSIIDKPVSVTNKQTNDITIFGNDFLNLKTINYLSLYNSKNKILLQLMLIFGGKISQLLSSKNLVKSLKQASINSYMVEEESGSISSAGMPLGQTHLLPKALSVLAKPMIFSDGYNNQNLKTATTLLLSFIHKRYLYRKNLIVPKLLSFADGNILDEPPSPPFSSLLIPAKRFENYKRFFRDTLTGDKMGQRKSQITLLEKLQYHMQLRSIKQLNATFSSQENLDFQSNAALTSQKLDTLMSLSTNNLLQNPTNINWYYQNRILKRHGQYLTNQWWNGQLSEHNAETVFLSDIDWRSSFIKNKNINITKSKNLYRLTQQKNNTDGLDVLLDFPDTDQYYNPKRRRWLLNNGSWNFWFNFDKLYSEEIVTTWILESLIQTYKYLHKNTELLDFVTNKFITLGYIAPENANLQNISGFPSQSELLSTKEIILTNSFKRF.

A disordered region spans residues 929-964 (SANFSNGPEESSLSTRLHIQKKRKAKKQRLETRRQK). The segment covering 936–945 (PEESSLSTRL) has biased composition (polar residues). Basic residues predominate over residues 946–955 (HIQKKRKAKK).

Its subcellular location is the plastid. The protein localises to the chloroplast. This is an uncharacterized protein from Chlamydomonas reinhardtii (Chlamydomonas smithii).